The sequence spans 557 residues: Formate--tetrahydrofolate ligase (557 aa).

ATP is bound at residue threonine 66–serine 73.

It belongs to the formate--tetrahydrofolate ligase family.

The enzyme catalyses (6S)-5,6,7,8-tetrahydrofolate + formate + ATP = (6R)-10-formyltetrahydrofolate + ADP + phosphate. It functions in the pathway one-carbon metabolism; tetrahydrofolate interconversion. This Clostridium botulinum (strain Loch Maree / Type A3) protein is Formate--tetrahydrofolate ligase.